We begin with the raw amino-acid sequence, 770 residues long: tRNA(Met) cytidine acetyltransferase TmcA 2 (770 aa).

ATP contacts are provided by glutamine 209 and arginine 390. Residues 458–608 (MIMLDGIHHK…YPVVVIRPIS (151 aa)) enclose the N-acetyltransferase domain. Residue 533-535 (IAV) coordinates acetyl-CoA.

This sequence belongs to the TmcA family.

It is found in the cytoplasm. It carries out the reaction cytidine(34) in elongator tRNA(Met) + acetyl-CoA + ATP + H2O = N(4)-acetylcytidine(34) in elongator tRNA(Met) + ADP + phosphate + CoA + H(+). It catalyses the reaction a cytidine in RNA + acetyl-CoA + ATP + H2O = an N(4)-acetylcytidine in RNA + ADP + phosphate + CoA + H(+). The enzyme catalyses a cytidine in tRNA + acetyl-CoA + ATP + H2O = an N(4)-acetylcytidine in tRNA + ADP + phosphate + CoA + H(+). The catalysed reaction is a cytidine in mRNA + acetyl-CoA + ATP + H2O = an N(4)-acetylcytidine in mRNA + ADP + phosphate + CoA + H(+). Functionally, catalyzes the formation of N(4)-acetylcytidine (ac(4)C) at the wobble position of tRNA(Met), by using acetyl-CoA as an acetyl donor and ATP (or GTP). Catalyzes the formation of 41 N(4)-acetylcytidine (ac(4)C) sites in RNA, almost always on the middle C of a CCG motif. Modifications are found mostly in tRNA, with small amounts found in rRNA and mRNA. This is tRNA(Met) cytidine acetyltransferase TmcA 2 from Saccharolobus solfataricus (strain ATCC 35092 / DSM 1617 / JCM 11322 / P2) (Sulfolobus solfataricus).